The chain runs to 106 residues: Thiosulfate sulfurtransferase GlpE (106 aa).

The 89-residue stretch at 17 to 105 folds into the Rhodanese domain; that stretch reads EQSEAKLVDI…WQRAELPIVR (89 aa). Cys65 (cysteine persulfide intermediate) is an active-site residue.

It belongs to the GlpE family.

The protein localises to the cytoplasm. It catalyses the reaction thiosulfate + hydrogen cyanide = thiocyanate + sulfite + 2 H(+). The enzyme catalyses thiosulfate + [thioredoxin]-dithiol = [thioredoxin]-disulfide + hydrogen sulfide + sulfite + 2 H(+). Transferase that catalyzes the transfer of sulfur from thiosulfate to thiophilic acceptors such as cyanide or dithiols. May function in a CysM-independent thiosulfate assimilation pathway by catalyzing the conversion of thiosulfate to sulfite, which can then be used for L-cysteine biosynthesis. The polypeptide is Thiosulfate sulfurtransferase GlpE (Vibrio campbellii (strain ATCC BAA-1116)).